We begin with the raw amino-acid sequence, 308 residues long: Cytochrome b (308 aa).

4 helical membrane-spanning segments follow: residues 1 to 21 (FGSLLGICLLTQIITGLLLAT), 45 to 66 (WLIRNLQANGASFFFICIYLHI), 81 to 101 (WNTGVILLLTLMATAFVGYVL), and 146 to 166 (FFALHFLLPFLIAGLTLIHFT). Residue H65 coordinates heme b. Heme b-binding residues include H150 and H164. Position 169 (H169) interacts with a ubiquinone. Transmembrane regions (helical) follow at residues 194 to 214 (VKDILGFMFMLLPLTTLALFS), 256 to 276 (LGGVLALAASVLVLFLAPFLH), and 288 to 308 (LSQFLFWMLVANLLILTWVGS).

The protein belongs to the cytochrome b family. As to quaternary structure, the cytochrome bc1 complex contains 11 subunits: 3 respiratory subunits (MT-CYB, CYC1 and UQCRFS1), 2 core proteins (UQCRC1 and UQCRC2) and 6 low-molecular weight proteins (UQCRH/QCR6, UQCRB/QCR7, UQCRQ/QCR8, UQCR10/QCR9, UQCR11/QCR10 and a cleavage product of UQCRFS1). This cytochrome bc1 complex then forms a dimer. Requires heme b as cofactor.

It is found in the mitochondrion inner membrane. Its function is as follows. Component of the ubiquinol-cytochrome c reductase complex (complex III or cytochrome b-c1 complex) that is part of the mitochondrial respiratory chain. The b-c1 complex mediates electron transfer from ubiquinol to cytochrome c. Contributes to the generation of a proton gradient across the mitochondrial membrane that is then used for ATP synthesis. This Colaptes rupicola (Southern Andean flicker) protein is Cytochrome b (MT-CYB).